The primary structure comprises 380 residues: 1-deoxy-D-xylulose 5-phosphate reductoisomerase 2 (380 aa).

Residues S10, G11, S12, I13, G36, K37, N38, and N120 each contribute to the NADPH site. Position 121 (K121) interacts with 1-deoxy-D-xylulose 5-phosphate. E122 lines the NADPH pocket. Position 146 (D146) interacts with Mn(2+). The 1-deoxy-D-xylulose 5-phosphate site is built by S147, E148, S172, and H195. E148 contacts Mn(2+). G201 serves as a coordination point for NADPH. The 1-deoxy-D-xylulose 5-phosphate site is built by S208, N213, K214, and E217. E217 is a Mn(2+) binding site.

The protein belongs to the DXR family. Mg(2+) is required as a cofactor. Mn(2+) serves as cofactor.

It catalyses the reaction 2-C-methyl-D-erythritol 4-phosphate + NADP(+) = 1-deoxy-D-xylulose 5-phosphate + NADPH + H(+). Its pathway is isoprenoid biosynthesis; isopentenyl diphosphate biosynthesis via DXP pathway; isopentenyl diphosphate from 1-deoxy-D-xylulose 5-phosphate: step 1/6. Functionally, catalyzes the NADPH-dependent rearrangement and reduction of 1-deoxy-D-xylulose-5-phosphate (DXP) to 2-C-methyl-D-erythritol 4-phosphate (MEP). The protein is 1-deoxy-D-xylulose 5-phosphate reductoisomerase 2 of Bacillus anthracis.